We begin with the raw amino-acid sequence, 73 residues long: Small ribosomal subunit protein bS18c (73 aa).

The protein belongs to the bacterial ribosomal protein bS18 family. In terms of assembly, part of the 30S ribosomal subunit.

Its subcellular location is the plastid. The protein localises to the chloroplast. This Rhodomonas salina (Cryptomonas salina) protein is Small ribosomal subunit protein bS18c.